We begin with the raw amino-acid sequence, 134 residues long: Holo-[acyl-carrier-protein] synthase (134 aa).

Residues D8 and E58 each contribute to the Mg(2+) site.

This sequence belongs to the P-Pant transferase superfamily. AcpS family. Mg(2+) serves as cofactor.

It is found in the cytoplasm. It carries out the reaction apo-[ACP] + CoA = holo-[ACP] + adenosine 3',5'-bisphosphate + H(+). Its function is as follows. Transfers the 4'-phosphopantetheine moiety from coenzyme A to a Ser of acyl-carrier-protein. The protein is Holo-[acyl-carrier-protein] synthase of Ruminiclostridium cellulolyticum (strain ATCC 35319 / DSM 5812 / JCM 6584 / H10) (Clostridium cellulolyticum).